The primary structure comprises 307 residues: UDP-N-acetylenolpyruvoylglucosamine reductase (307 aa).

Positions 33–197 (TGGNADFYIT…LEAAFTLAPG (165 aa)) constitute an FAD-binding PCMH-type domain. Arginine 176 is a catalytic residue. The Proton donor role is filled by serine 226. Glutamate 296 is a catalytic residue.

This sequence belongs to the MurB family. FAD serves as cofactor.

It localises to the cytoplasm. The catalysed reaction is UDP-N-acetyl-alpha-D-muramate + NADP(+) = UDP-N-acetyl-3-O-(1-carboxyvinyl)-alpha-D-glucosamine + NADPH + H(+). The protein operates within cell wall biogenesis; peptidoglycan biosynthesis. In terms of biological role, cell wall formation. The protein is UDP-N-acetylenolpyruvoylglucosamine reductase of Staphylococcus aureus (strain Mu3 / ATCC 700698).